A 1333-amino-acid polypeptide reads, in one-letter code: MLDVNVFDELRIGLATADDIRRWSKGEVKKPETINYRTLKPEKDGLFCERIFGPTRDWECACGKYKRVRYKGIICERCGVEVTKSKVRRERMGHIELAAPVTHIWYFKGVPSRLGYLLDLAPKDLDLIIYFGANIITSVDEEARHSDQSTLEAEMLLEKKDVEADAESEIAERAEKLEEDLAELEAAGAKADARRKVQNAAEKEMQHIRERAEREIDRLEEIWQTFIKLAPKQMIRDEKLYDELVDRYEDYFTGGMGAESIQTLIRGFDLDAEAEELRTIINEGKGQKKMRALKRLKVVAAFQRSGNDPAGMVLNAIPVIPPELRPMVQLDGGRFATSDLNDLYRRVINRNNRLKRMIELGAPEIIVNNEKRMLQESVDALFDNGRRGRPVTGPGNRPLKSLSDLLKGKQGRFRQNLLGKRVDYSGRSVIIVGPQLRLHECGLPKLMALELFKPFVMKRLVENEYAQNIKSAKRMVERQRPEVWDVLEEAISEHPVMLNRAPTLHRLGIQAFEPVLVEGKAIQLHPLACEAFNADFDGDQMAVHLPLSAEAQAEARILMLASNNILSPASGKPLAMPRLDMVTGLYYLTLKKSPEEFGGQGAYQPADENGPEKGVYSSYAEAIMAYDRGVLGLQAPVRIRLDHLRPPAELENELFPEGWNQGDTWLAETTLGRVMFNEILPWNYPYLEGIMVRKGGGADKIMLGDVVNDLAARYPMITVAQTMDKMKDAGFYWSTRSGVTIAMSDVLVLPNKDEILDRYEAAARQIETKYNRGKLTGRERYDRLVELWKDATDEVGQAVEDIYPDDNPIPMIVKSGAAGNMRQIWTLAGMKGMVVNSKGDYITRPIKTSFREGLTVLEYFNNSHGSRKGLADTALRTADSGYLTRRLVDVAQDVIVRVEDCGTRQGVRVPVAAEVLDATGAVSGYTRHDLIETSVSGRVLAGDATNAEGEVILAAGSDLTELNIDLLVEAGIQQVKVRSVLTCQTPTGVCAKCYGKSMASGKQVDIGEAVGIVAAQSIGEPGTQLTMRTFHQGGVGGDITGGLPRVQELFEARVPKNLAPIASADGVIHLEDEGNFYTLTLVPDDGSDNVVYDKLSKRQGLASIRVPMEHNPAAFIERTLAEGDHVTVGTRLLRGAAAPHDVLEVLGRRGVEQHLIDEVQAVYRAQGVAIHDKHIEIIIRQMLRRGTVIESGSTEFLPGSLVDLSEAKLANSEAIANGGQPAELRSEIMGITKASLATESWLSAASFQETTRVLTDAAINKRSDKLIGLKENVIIGKLIPAGTGISRYRNISIKPTEAARNAAYSIPTYGESIYGDDGFGEFTGASVPLDEAF.

Cys60, Cys62, Cys75, and Cys78 together coordinate Zn(2+). Positions 535, 537, and 539 each coordinate Mg(2+). Residues Cys901, Cys983, Cys990, and Cys993 each coordinate Zn(2+).

The protein belongs to the RNA polymerase beta' chain family. The RNAP catalytic core consists of 2 alpha, 1 beta, 1 beta' and 1 omega subunit. When a sigma factor is associated with the core the holoenzyme is formed, which can initiate transcription. Requires Mg(2+) as cofactor. Zn(2+) is required as a cofactor.

The catalysed reaction is RNA(n) + a ribonucleoside 5'-triphosphate = RNA(n+1) + diphosphate. In terms of biological role, DNA-dependent RNA polymerase catalyzes the transcription of DNA into RNA using the four ribonucleoside triphosphates as substrates. The chain is DNA-directed RNA polymerase subunit beta' from Corynebacterium efficiens (strain DSM 44549 / YS-314 / AJ 12310 / JCM 11189 / NBRC 100395).